We begin with the raw amino-acid sequence, 208 residues long: Small ribosomal subunit protein uS4 (208 aa).

Residues 97–158 form the S4 RNA-binding domain; sequence TRLDNVIYRM…RAQKYLCVQE (62 aa).

This sequence belongs to the universal ribosomal protein uS4 family. In terms of assembly, part of the 30S ribosomal subunit. Contacts protein S5. The interaction surface between S4 and S5 is involved in control of translational fidelity.

Its function is as follows. One of the primary rRNA binding proteins, it binds directly to 16S rRNA where it nucleates assembly of the body of the 30S subunit. In terms of biological role, with S5 and S12 plays an important role in translational accuracy. The chain is Small ribosomal subunit protein uS4 from Xylella fastidiosa (strain M12).